Reading from the N-terminus, the 392-residue chain is Chalcone synthase (392 aa).

The active site involves C165.

The protein belongs to the thiolase-like superfamily. Chalcone/stilbene synthases family.

The enzyme catalyses (E)-4-coumaroyl-CoA + 3 malonyl-CoA + 3 H(+) = 2',4,4',6'-tetrahydroxychalcone + 3 CO2 + 4 CoA. It functions in the pathway secondary metabolite biosynthesis; flavonoid biosynthesis. The primary product of this enzyme is 4,2',4',6'-tetrahydroxychalcone (also termed naringenin-chalcone or chalcone) which can under specific conditions spontaneously isomerize into naringenin. The sequence is that of Chalcone synthase (CHS) from Persea americana (Avocado).